The sequence spans 1502 residues: Nucleoporin NUP170 (1502 aa).

A disordered region spans residues 1 to 31; that stretch reads MFQSFFHNNGPAAAGETFSDSRSYPLTNHQE. The segment covering 18–30 has biased composition (polar residues); that stretch reads FSDSRSYPLTNHQ. The interval 233–261 is leucine-zipper; the sequence is LISTTMELFMFAISLDKATNELSVFNTHL. Serine 1247 bears the Phosphoserine mark.

This sequence belongs to the non-repetitive/WGA-negative nucleoporin family. In terms of assembly, component of the nuclear pore complex (NPC). NPC constitutes the exclusive means of nucleocytoplasmic transport. NPCs allow the passive diffusion of ions and small molecules and the active, nuclear transport receptor-mediated bidirectional transport of macromolecules such as proteins, RNAs, ribonucleoparticles (RNPs), and ribosomal subunits across the nuclear envelope. Due to its 8-fold rotational symmetry, all subunits are present with 8 copies or multiples thereof. During mitosis NUP53 changes its binding partner within the NPC from NUP170 to NIC96, exposing a high affinity binding site for the karyopherin PSE1, and retaining it in the NPC.

The protein resides in the nucleus. It is found in the nuclear pore complex. Its subcellular location is the nucleus membrane. Its function is as follows. Functions as a component of the nuclear pore complex (NPC). NPC components, collectively referred to as nucleoporins (NUPs), can play the role of both NPC structural components and of docking or interaction partners for transiently associated nuclear transport factors. NUP170 probably plays an important role in NPC assembly and organization. In addition it is required for chromosome transmission fidelity. The protein is Nucleoporin NUP170 (NUP170) of Saccharomyces cerevisiae (strain ATCC 204508 / S288c) (Baker's yeast).